A 186-amino-acid polypeptide reads, in one-letter code: Myosin light chain 1, skeletal muscle isoform (186 aa).

Met-1 bears the Blocked amino end (Met) mark. Residues 1 to 26 (MPKAPAKKAEPAPAPAPAPEPAPAPA) form a disordered region. The segment covering 12-26 (APAPAPAPEPAPAPA) has biased composition (pro residues). 2 consecutive EF-hand domains span residues 42 to 77 (DQIE…LGQN) and 119 to 154 (AGFE…LGEK).

In terms of assembly, myosin is a hexamer of 2 heavy chains and 4 light chains.

In Chelon ramada (Thin-lipped grey mullet), this protein is Myosin light chain 1, skeletal muscle isoform.